Consider the following 271-residue polypeptide: 4-hydroxy-tetrahydrodipicolinate reductase (271 aa).

NAD(+) contacts are provided by residues 11 to 16 (GGSGRM) and E37. R38 contributes to the NADP(+) binding site. NAD(+) contacts are provided by residues 101–103 (GTT) and 125–128 (APNM). H158 serves as the catalytic Proton donor/acceptor. Residue H159 coordinates (S)-2,3,4,5-tetrahydrodipicolinate. The active-site Proton donor is K162. 168-169 (GT) contacts (S)-2,3,4,5-tetrahydrodipicolinate.

This sequence belongs to the DapB family.

It localises to the cytoplasm. The enzyme catalyses (S)-2,3,4,5-tetrahydrodipicolinate + NAD(+) + H2O = (2S,4S)-4-hydroxy-2,3,4,5-tetrahydrodipicolinate + NADH + H(+). It carries out the reaction (S)-2,3,4,5-tetrahydrodipicolinate + NADP(+) + H2O = (2S,4S)-4-hydroxy-2,3,4,5-tetrahydrodipicolinate + NADPH + H(+). It functions in the pathway amino-acid biosynthesis; L-lysine biosynthesis via DAP pathway; (S)-tetrahydrodipicolinate from L-aspartate: step 4/4. Catalyzes the conversion of 4-hydroxy-tetrahydrodipicolinate (HTPA) to tetrahydrodipicolinate. The sequence is that of 4-hydroxy-tetrahydrodipicolinate reductase from Shewanella loihica (strain ATCC BAA-1088 / PV-4).